The chain runs to 841 residues: MTQVTVKELAKVVDTPVERLLQQMREAGLSHTAAEQVVTDNEKQALLTHLKSGHKAKVEEPRKITLQRKTTSTLRVAGSKSISVEVRKKKVFVQRSPEEIEAERKREMDERRAVENAARQKAEEEAKRRAEEDARSQPAASQSAPAAAEPVAAAEPVREAAPAAAPAPASAAPSADARKRDEQRRPDKPRADDRNARGGDGERKNAPHRASVKEKAPAPRVAPRTTDEESDSFRRGGRGKGKLKKRNAHGFQSPTGPVIRDVAIGETITVGELSAQMSVKAAEVIKFMFKMGTPVTINQVLDQETAQLIAEELGHKVTLVSDNALEDSLAESLKFEGESFSRAPVVTVMGHVDHGKTSLLDYIRRAKVAAGEAGGITQHIGAYHVETERGMVTFLDTPGHAAFTAMRARGAKATDIVILVVAADDGVMPQTIEAVQHAVAAGVPLVVAVNKIDKPGADLDRIRSELSVHGVTSEEWGGDTPFVSVSAKMGTGVDELLEAVLLQAEVLELKATPSAPGRGVVVESRLDKGRGPVATVLVQDGTLRQGDMVLVGSNFGRIRAMLDENGKPVKEAGPSIPVEILGLDGTPDAGDEMSVLSDEKKAREVALFRQGKFREVKLARAHAGKLENIFENMGQAEKKTLNIVLKSDVRGSLEALNGALNGLGNDEVQVRVVGGGVGGITESDANLALASNAVLFGFNVRADAGARKIVEQEGLDMRYYNVIYDIIEDVKKALTGMLGSDVRENILGIAEVRDVFRSPKFGAIAGCMVLEGTVYRNRPIRVLREDIVIFEGELESLRRFKDDAAEVRAGMECGIGVKSYNDVKVGDKIEVFEKVQVARSL.

The segment at 87 to 254 (RKKKVFVQRS…KRNAHGFQSP (168 aa)) is disordered. Residues 96 to 135 (SPEEIEAERKREMDERRAVENAARQKAEEEAKRRAEEDAR) are compositionally biased toward basic and acidic residues. Over residues 136-175 (SQPAASQSAPAAAEPVAAAEPVREAAPAAAPAPASAAPSA) the composition is skewed to low complexity. 2 stretches are compositionally biased toward basic and acidic residues: residues 176-217 (DARK…EKAP) and 225-234 (TTDEESDSFR). The segment covering 235-248 (RGGRGKGKLKKRNA) has biased composition (basic residues). Residues 341–510 (SRAPVVTVMG…LLQAEVLELK (170 aa)) enclose the tr-type G domain. The segment at 350 to 357 (GHVDHGKT) is G1. 350–357 (GHVDHGKT) is a binding site for GTP. Residues 375–379 (GITQH) are G2. The G3 stretch occupies residues 396–399 (DTPG). GTP-binding positions include 396–400 (DTPGH) and 450–453 (NKID). Residues 450-453 (NKID) are G4. Residues 486-488 (SAK) form a G5 region.

This sequence belongs to the TRAFAC class translation factor GTPase superfamily. Classic translation factor GTPase family. IF-2 subfamily.

It localises to the cytoplasm. Functionally, one of the essential components for the initiation of protein synthesis. Protects formylmethionyl-tRNA from spontaneous hydrolysis and promotes its binding to the 30S ribosomal subunits. Also involved in the hydrolysis of GTP during the formation of the 70S ribosomal complex. This Pseudomonas syringae pv. syringae (strain B728a) protein is Translation initiation factor IF-2.